The chain runs to 671 residues: UvrABC system protein B (671 aa).

Positions K35–R423 constitute a Helicase ATP-binding domain. Residue G48 to T55 coordinates ATP. A Beta-hairpin motif is present at residues N101–Q124. In terms of domain architecture, Helicase C-terminal spans Q440–I602. The region spanning Q632–E667 is the UVR domain.

It belongs to the UvrB family. In terms of assembly, forms a heterotetramer with UvrA during the search for lesions. Interacts with UvrC in an incision complex.

The protein resides in the cytoplasm. Functionally, the UvrABC repair system catalyzes the recognition and processing of DNA lesions. A damage recognition complex composed of 2 UvrA and 2 UvrB subunits scans DNA for abnormalities. Upon binding of the UvrA(2)B(2) complex to a putative damaged site, the DNA wraps around one UvrB monomer. DNA wrap is dependent on ATP binding by UvrB and probably causes local melting of the DNA helix, facilitating insertion of UvrB beta-hairpin between the DNA strands. Then UvrB probes one DNA strand for the presence of a lesion. If a lesion is found the UvrA subunits dissociate and the UvrB-DNA preincision complex is formed. This complex is subsequently bound by UvrC and the second UvrB is released. If no lesion is found, the DNA wraps around the other UvrB subunit that will check the other stand for damage. This chain is UvrABC system protein B, found in Mycoplasma mycoides subsp. mycoides SC (strain CCUG 32753 / NCTC 10114 / PG1).